The following is a 255-amino-acid chain: Acetylglutamate kinase (255 aa).

Substrate contacts are provided by residues 40 to 41 (GG), R62, and N153.

This sequence belongs to the acetylglutamate kinase family. ArgB subfamily.

The protein localises to the cytoplasm. It carries out the reaction N-acetyl-L-glutamate + ATP = N-acetyl-L-glutamyl 5-phosphate + ADP. It participates in amino-acid biosynthesis; L-arginine biosynthesis; N(2)-acetyl-L-ornithine from L-glutamate: step 2/4. Functionally, catalyzes the ATP-dependent phosphorylation of N-acetyl-L-glutamate. The polypeptide is Acetylglutamate kinase (Bacillus cereus (strain 03BB102)).